A 319-amino-acid chain; its full sequence is High-affinity zinc uptake system protein ZnuA (319 aa).

The signal sequence occupies residues 1–20 (MFKKWSGLFVIAACFLLVAA). The N-palmitoyl cysteine moiety is linked to residue C21. C21 carries the S-diacylglycerol cysteine lipid modification. The Zn(2+) site is built by H71, H148, H212, and E287.

The protein belongs to the bacterial solute-binding protein 9 family. The complex is composed of two ATP-binding proteins (ZnuC), two transmembrane proteins (ZnuB) and a solute-binding protein (ZnuA).

It is found in the cell membrane. The protein localises to the membrane raft. Functionally, part of the ATP-binding cassette (ABC) transport system ZnuABC involved in zinc import. Binds zinc with high affinity and specificity and delivers it to the membrane permease for translocation into the cytoplasm. ZnuABC-mediated zinc transport is required for comF expression and competence development. This is High-affinity zinc uptake system protein ZnuA (znuA) from Bacillus subtilis (strain 168).